A 395-amino-acid polypeptide reads, in one-letter code: Acid ceramidase (395 aa).

A signal peptide spans methionine 1–alanine 21. A disulfide bridge connects residues cysteine 31 and cysteine 340. Cysteine 143 functions as the Nucleophile in the catalytic mechanism. N-linked (GlcNAc...) asparagine glycans are attached at residues asparagine 173, asparagine 259, asparagine 286, and asparagine 348. Cysteine 388 and cysteine 392 are oxidised to a cystine.

This sequence belongs to the acid ceramidase family. As to quaternary structure, heterodimer; disulfide-linked. The heterodimer is composed of the disulfide-linked alpha and beta chains produced by autocatalytic cleavage of the precursor. In terms of processing, N-glycosylated. Post-translationally, proteolytically cleaved into two chains alpha and beta that remain associated via a disulfide bond. Cleavage gives rise to a conformation change that activates the enzyme. The same catalytic Cys residue mediates the autoproteolytic cleavage and subsequent hydrolysis of lipid substrates. The beta chain may undergo an additional C-terminal processing.

It is found in the lysosome. The protein localises to the secreted. The catalysed reaction is an N-acylsphing-4-enine + H2O = sphing-4-enine + a fatty acid. The enzyme catalyses N-dodecanoylsphing-4-enine + H2O = dodecanoate + sphing-4-enine. It catalyses the reaction N-tetradecanoylsphing-4-enine + H2O = tetradecanoate + sphing-4-enine. It carries out the reaction N-hexadecanoylsphing-4-enine + H2O = sphing-4-enine + hexadecanoate. The catalysed reaction is N-octadecanoylsphing-4-enine + H2O = sphing-4-enine + octadecanoate. The enzyme catalyses N-dodecanoyl-(4R)-hydroxysphinganine + H2O = (4R)-hydroxysphinganine + dodecanoate. It catalyses the reaction N-(dodecanoyl)-sphinganine + H2O = dodecanoate + sphinganine. It carries out the reaction N-(acetyl)-sphing-4-enine + H2O = sphing-4-enine + acetate. The catalysed reaction is N-(hexanoyl)sphing-4-enine + H2O = hexanoate + sphing-4-enine. The enzyme catalyses N-octanoylsphing-4-enine + H2O = octanoate + sphing-4-enine. It catalyses the reaction N-(9Z-octadecenoyl)-sphing-4-enine + H2O = sphing-4-enine + (9Z)-octadecenoate. It carries out the reaction N-dodecanoylethanolamine + H2O = dodecanoate + ethanolamine. The protein operates within lipid metabolism; sphingolipid metabolism. In terms of biological role, lysosomal ceramidase that hydrolyzes sphingolipid ceramides into sphingosine and free fatty acids at acidic pH. Ceramides, sphingosine, and its phosphorylated form sphingosine-1-phosphate are bioactive lipids that mediate cellular signaling pathways regulating several biological processes including cell proliferation, apoptosis and differentiation. Has a higher catalytic efficiency towards C12-ceramides versus other ceramides. Also catalyzes the reverse reaction allowing the synthesis of ceramides from fatty acids and sphingosine. For the reverse synthetic reaction, the natural sphingosine D-erythro isomer is more efficiently utilized as a substrate compared to D-erythro-dihydrosphingosine and D-erythro-phytosphingosine, while the fatty acids with chain lengths of 12 or 14 carbons are the most efficiently used. Also has an N-acylethanolamine hydrolase activity. By regulating the levels of ceramides, sphingosine and sphingosine-1-phosphate in the epidermis, mediates the calcium-induced differentiation of epidermal keratinocytes. Also indirectly regulates tumor necrosis factor/TNF-induced apoptosis. By regulating the intracellular balance between ceramides and sphingosine, in adrenocortical cells, probably also acts as a regulator of steroidogenesis. In Heterocephalus glaber (Naked mole rat), this protein is Acid ceramidase.